Here is a 2089-residue protein sequence, read N- to C-terminus: Mediator of DNA damage checkpoint protein 1 (2089 aa).

The span at Met-1 to Gln-19 shows a compositional bias: acidic residues. The segment at Met-1–Glu-22 is disordered. The interaction with CHEK2 stretch occupies residues Met-1–Thr-150. The tract at residues Glu-2 to Thr-220 is interaction with the MRN complex. Thr-4 carries the post-translational modification Phosphothreonine; by ATM. The region spanning Asn-54 to Lys-105 is the FHA domain. Ser-108 is subject to Phosphoserine. Positions Leu-145–Glu-568 are required for nuclear localization (NLS1). Thr-146 is subject to Phosphothreonine. Ser-168 carries the phosphoserine; by CK2 modification. A Phosphoserine modification is found at Ser-176. Disordered stretches follow at residues Arg-185–Ser-248, Asp-261–Asn-280, and Gly-286–His-317. Residues Ser-196 and Ser-218 each carry the phosphoserine; by CK2 modification. A Phosphothreonine; by CK2 modification is found at Thr-220. The segment covering Asp-261–Val-274 has biased composition (basic and acidic residues). A Phosphoserine; by CK2 modification is found at Ser-299. At Thr-301 the chain carries Phosphothreonine; by CK2. A compositionally biased stretch (basic and acidic residues) spans Asp-306 to His-317. The residue at position 329 (Ser-329) is a Phosphoserine; by CK2. Thr-331 carries the post-translational modification Phosphothreonine; by CK2. Ser-372 bears the Phosphoserine mark. At Ser-376 the chain carries Phosphoserine; by CK2. At Thr-378 the chain carries Phosphothreonine; by CK2. Residues Ser-394 and Ser-397 each carry the phosphoserine modification. Ser-402 is modified (phosphoserine; by CK2). Thr-404 bears the Phosphothreonine; by CK2 mark. Ser-411 carries the phosphoserine modification. Thr-449 is modified (phosphothreonine). The residue at position 453 (Ser-453) is a Phosphoserine; by CK2. Thr-455 bears the Phosphothreonine; by CK2 mark. The interval Arg-482–Ala-515 is disordered. Phosphoserine is present on residues Ser-485, Ser-495, Ser-498, Ser-504, Ser-505, and Ser-513. Thr-523 carries the phosphothreonine modification. Ser-590 bears the Phosphoserine mark. Lys-616 is covalently cross-linked (Glycyl lysine isopeptide (Lys-Gly) (interchain with G-Cter in SUMO1); alternate). Lys-616 participates in a covalent cross-link: Glycyl lysine isopeptide (Lys-Gly) (interchain with G-Cter in SUMO2); alternate. Disordered regions lie at residues Asp-653–Gly-689 and Ser-780–Asn-1887. Residues Gly-671–Glu-685 show a composition bias toward basic and acidic residues. Phosphoserine is present on residues Ser-780 and Ser-793. Lys-812 bears the N6-acetyllysine mark. Basic and acidic residues-rich tracts occupy residues Glu-819–Thr-844, Glu-851–Lys-862, Asp-868–Val-905, and Ala-914–Pro-951. Ser-955 and Ser-998 each carry phosphoserine. Polar residues predominate over residues Ser-955 to Pro-965. A compositionally biased stretch (basic and acidic residues) spans Lys-1016–Gln-1031. Ser-1033 bears the Phosphoserine mark. Over residues Pro-1040–Lys-1051 the composition is skewed to pro residues. Phosphoserine is present on residues Ser-1068 and Ser-1086. A compositionally biased stretch (basic residues) spans Pro-1103–Ser-1113. The segment covering Pro-1129–Lys-1156 has biased composition (polar residues). Residues Ser-1148–Glu-1610 are interaction with the PRKDC complex. Residue Thr-1157 is modified to Phosphothreonine. Over residues Gln-1169–Thr-1187 the composition is skewed to polar residues. The residue at position 1198 (Thr-1198) is a Phosphothreonine. The span at Gln-1210–Thr-1228 shows a compositional bias: polar residues. Ser-1235 is modified (phosphoserine). Thr-1239 is modified (phosphothreonine). Over residues Gln-1251–Ala-1268 the composition is skewed to polar residues. A phosphothreonine mark is found at Thr-1280 and Thr-1302. Composition is skewed to low complexity over residues Lys-1304–Ser-1318 and Thr-1347–Ser-1359. Positions Pro-1375–Ala-1391 are enriched in polar residues. 2 positions are modified to phosphoserine: Ser-1399 and Ser-1400. An N6-acetyllysine modification is found at Lys-1402. Thr-1403 is subject to Phosphothreonine. A Glycyl lysine isopeptide (Lys-Gly) (interchain with G-Cter in SUMO1); alternate cross-link involves residue Lys-1413. A Glycyl lysine isopeptide (Lys-Gly) (interchain with G-Cter in SUMO2); alternate cross-link involves residue Lys-1413. Polar residues-rich tracts occupy residues Pro-1416–Thr-1444, Gln-1456–Arg-1475, Ala-1498–Thr-1514, and Gln-1538–Ala-1555. Residues Thr-1425 and Thr-1466 each carry the phosphothreonine modification. Phosphothreonine is present on Thr-1548. Residue Ser-1564 is modified to Phosphoserine. 2 positions are modified to phosphothreonine: Thr-1567 and Thr-1589. Over residues Gln-1579 to Ala-1596 the composition is skewed to polar residues. Phosphoserine is present on Ser-1604. The residue at position 1608 (Thr-1608) is a Phosphothreonine. Over residues Pro-1611–His-1620 the composition is skewed to pro residues. A compositionally biased stretch (polar residues) spans Ser-1624–Arg-1636. A phosphothreonine mark is found at Thr-1630, Thr-1664, and Thr-1671. Polar residues predominate over residues Gly-1678 to Val-1689. A Phosphoserine modification is found at Ser-1681. Phosphothreonine is present on Thr-1697. Polar residues predominate over residues Pro-1698–Ser-1719. Residues Pro-1698 to Thr-2089 form a required for nuclear localization (NLS2) region. 2 positions are modified to phosphoserine: Ser-1702 and Ser-1711. Lys-1740 participates in a covalent cross-link: Glycyl lysine isopeptide (Lys-Gly) (interchain with G-Cter in SUMO2). At Ser-1775 the chain carries Phosphoserine. Lys-1790 participates in a covalent cross-link: Glycyl lysine isopeptide (Lys-Gly) (interchain with G-Cter in SUMO2). The residue at position 1800 (Thr-1800) is a Phosphothreonine. The residue at position 1820 (Ser-1820) is a Phosphoserine. A compositionally biased stretch (polar residues) spans His-1823–Thr-1836. Residue Lys-1840 forms a Glycyl lysine isopeptide (Lys-Gly) (interchain with G-Cter in SUMO1); alternate linkage. Lys-1840 is covalently cross-linked (Glycyl lysine isopeptide (Lys-Gly) (interchain with G-Cter in SUMO2); alternate). Over residues Ala-1847–Val-1857 the composition is skewed to basic and acidic residues. Thr-1858 bears the Phosphothreonine mark. 2 BRCT domains span residues Ala-1892–Val-1970 and Arg-1991–Ser-2082. An Omega-N-methylarginine modification is found at Arg-1943.

Homodimer. Interacts with H2AX, which requires phosphorylation of H2AX on 'Ser-139'. Interacts with the MRN complex, composed of MRE11, RAD50, and NBN. Interacts with CHEK2, which requires ATM-mediated phosphorylation of 'Thr-68' within the FHA domain of CHEK2. Interacts constitutively with the BRCA1-BARD1 complex, SMC1A and TP53BP1. Interacts with ATM and FANCD2, and these interactions are reduced upon DNA damage. Also interacts with the PRKDC complex, composed of XRCC6/KU70, XRCC5/KU80 and PRKDC/XRCC7. This interaction may be required for PRKDC autophosphorylation, which is essential for DNA double strand break (DSB) repair. When phosphorylated by ATM, interacts with RNF8 (via FHA domain). Interacts with CEP164. When phosphorylated, interacts with APTX (via FHA-like domain). Interacts (when phosphorylated) with TOPBP1; promoting TOPBP1 localization to DNA damage sites during mitosis. Interacts (when phosphorylated) with NBN; promoting NBN and MRN complex localization to DNA damage sites. In terms of processing, phosphorylated upon exposure to ionizing radiation (IR), ultraviolet radiation (UV), and hydroxyurea (HU). Phosphorylation in response to IR requires ATM, NBN, and possibly CHEK2. Also phosphorylated during the G2/M phase of the cell cycle and during activation of the mitotic spindle checkpoint. Phosphorylation at Thr-4 by ATM stabilizes and enhances homodimerization via the FHA domain. Phosphorylated at Ser-168 and Ser-196 by CK2 in response to DNA damage during mitosis, promoting interaction with TOPBP1. Phosphorylated by CK2 in response to DNA damage, promoting interaction with NBN and recruitment of the MRN complex to DNA damage sites. Sumoylation at Lys-1840 by PIAS4 following DNA damage promotes ubiquitin-mediated degradation. Post-translationally, ubiquitinated by RNF4, leading to proteasomal degradation; undergoes 'Lys-48'-linked polyubiquitination. Highly expressed in testis.

The protein resides in the nucleus. It localises to the chromosome. Its function is as follows. Histone reader protein required for checkpoint-mediated cell cycle arrest in response to DNA damage within both the S phase and G2/M phases of the cell cycle. Specifically recognizes and binds histone H2AX phosphorylated at 'Ser-139', a marker of DNA damage, serving as a scaffold for the recruitment of DNA repair and signal transduction proteins to discrete foci of DNA damage sites. Also required for downstream events subsequent to the recruitment of these proteins. These include phosphorylation and activation of the ATM, CHEK1 and CHEK2 kinases, and stabilization of TP53/p53 and apoptosis. ATM and CHEK2 may also be activated independently by a parallel pathway mediated by TP53BP1. Required for chromosomal stability during mitosis by promoting recruitment of TOPBP1 to DNA double strand breaks (DSBs): TOPBP1 forms filamentous assemblies that bridge MDC1 and tether broken chromosomes during mitosis. Required for the repair of DSBs via homologous recombination by promoting recruitment of NBN component of the MRN complex to DSBs. The polypeptide is Mediator of DNA damage checkpoint protein 1 (Homo sapiens (Human)).